The following is a 173-amino-acid chain: Alpha-crystallin B chain (173 aa).

Residue methionine 1 is modified to N-acetylmethionine. The sHSP domain maps to 54–162; it reads RLPSWIESGL…PERSIPITRE (109 aa). The Zn(2+) site is built by histidine 81, histidine 102, glutamate 104, and histidine 109.

Belongs to the small heat shock protein (HSP20) family. As to quaternary structure, heteromer composed of three CRYAA and one CRYAB subunits. Aggregates with homologous proteins, including the small heat shock protein HSPB1, to form large heteromeric complexes. Inter-subunit bridging via zinc ions enhances stability, which is crucial as there is no protein turn over in the lens.

Functionally, may contribute to the transparency and refractive index of the lens. The polypeptide is Alpha-crystallin B chain (CRYAB) (Aquarana catesbeiana (American bullfrog)).